Consider the following 531-residue polypeptide: UDP-glucuronosyltransferase 1A7 (531 aa).

The first 25 residues, 1–25 (MAPADFPASLPLCVCLLLASGLAQA), serve as a signal peptide directing secretion. Asn-293 and Asn-431 each carry an N-linked (GlcNAc...) asparagine glycan. Residues 489–509 (VIGFLLAIVLTVVFIVFKCCA) form a helical membrane-spanning segment.

Belongs to the UDP-glycosyltransferase family. As to quaternary structure, homodimer. Homooligomer. Interacts with UGT1A1, UGT1A3, UGT1A4, UGT1A6, UGT1A8, UGT1A9 and UGT1A10 to form heterodimers. As to expression, widely expressed with highest levels detected in colon and kidney.

The protein resides in the endoplasmic reticulum membrane. The enzyme catalyses glucuronate acceptor + UDP-alpha-D-glucuronate = acceptor beta-D-glucuronoside + UDP + H(+). It carries out the reaction 17alpha-estradiol + UDP-alpha-D-glucuronate = 17alpha-estradiol 3-O-(beta-D-glucuronate) + UDP + H(+). It catalyses the reaction prunetin + UDP-alpha-D-glucuronate = prunetin-5-O-beta-D-glucuronide + UDP. The catalysed reaction is 5-epi-5-F2t-IsoP + UDP-alpha-D-glucuronate = 5-epi-5-F2t-IsoP-glucuronide + UDP + H(+). The enzyme catalyses (E)-ferulate + UDP-alpha-D-glucuronate = (E)-ferulic acid beta-D-glucuronate ester + UDP. It carries out the reaction candesartan + UDP-alpha-D-glucuronate = candesartan O-beta-D-glucuronoside + UDP. It catalyses the reaction SN-38 + UDP-alpha-D-glucuronate = SN-38 O-beta-D-glucuronide + UDP + H(+). The catalysed reaction is mycophenolate + UDP-alpha-D-glucuronate = mycophenolate 7-O-beta-D-glucuronide + UDP + H(+). In terms of biological role, UDP-glucuronosyltransferase (UGT) that catalyzes phase II biotransformation reactions in which lipophilic substrates are conjugated with glucuronic acid to increase the metabolite's water solubility, thereby facilitating excretion into either the urine or bile. Essential for the elimination and detoxification of drugs, xenobiotics and endogenous compounds. Catalyzes the glucuronidation of endogenous estrogen hormone epiestradiol. Involved in the glucuronidation of F2-isoprostane (5-epi-5-F2t-IsoP). Involved in the glucuronidation of the phytochemical ferulic acid at the carboxylic acid group. Also catalyzes the glucuronidation of the isoflavones genistein, daidzein, glycitein, formononetin, biochanin A and prunetin, which are phytoestrogens with anticancer and cardiovascular properties. Involved in the glucuronidation of the AGTR1 angiotensin receptor antagonist caderastan, a drug which can inhibit the effect of angiotensin II. Involved in the biotransformation of 7-ethyl-10-hydroxycamptothecin (SN-38), the pharmacologically active metabolite of the anticancer drug irinotecan. Also metabolizes mycophenolate, an immunosuppressive agent. The protein is UDP-glucuronosyltransferase 1A7 of Mus musculus (Mouse).